The following is a 178-amino-acid chain: ATP-dependent protease subunit HslV (178 aa).

T7 is an active-site residue. G162, C165, and T168 together coordinate Na(+).

This sequence belongs to the peptidase T1B family. HslV subfamily. A double ring-shaped homohexamer of HslV is capped on each side by a ring-shaped HslU homohexamer. The assembly of the HslU/HslV complex is dependent on binding of ATP.

The protein resides in the cytoplasm. The catalysed reaction is ATP-dependent cleavage of peptide bonds with broad specificity.. Allosterically activated by HslU binding. Protease subunit of a proteasome-like degradation complex believed to be a general protein degrading machinery. This Paraburkholderia phymatum (strain DSM 17167 / CIP 108236 / LMG 21445 / STM815) (Burkholderia phymatum) protein is ATP-dependent protease subunit HslV.